Consider the following 64-residue polypeptide: Large ribosomal subunit protein bL28 (64 aa).

It belongs to the bacterial ribosomal protein bL28 family.

The protein is Large ribosomal subunit protein bL28 of Campylobacter jejuni subsp. jejuni serotype O:6 (strain 81116 / NCTC 11828).